A 206-amino-acid polypeptide reads, in one-letter code: Ribosomal RNA large subunit methyltransferase E (206 aa).

5 residues coordinate S-adenosyl-L-methionine: G60, W62, D80, D96, and D121. K161 serves as the catalytic Proton acceptor.

Belongs to the class I-like SAM-binding methyltransferase superfamily. RNA methyltransferase RlmE family.

The protein localises to the cytoplasm. It carries out the reaction uridine(2552) in 23S rRNA + S-adenosyl-L-methionine = 2'-O-methyluridine(2552) in 23S rRNA + S-adenosyl-L-homocysteine + H(+). Its function is as follows. Specifically methylates the uridine in position 2552 of 23S rRNA at the 2'-O position of the ribose in the fully assembled 50S ribosomal subunit. The polypeptide is Ribosomal RNA large subunit methyltransferase E (Hydrogenovibrio crunogenus (strain DSM 25203 / XCL-2) (Thiomicrospira crunogena)).